Here is a 489-residue protein sequence, read N- to C-terminus: Ribulose bisphosphate carboxylase large chain 2 (489 aa).

Residues N128 and T178 each coordinate substrate. Residue K180 is the Proton acceptor of the active site. A substrate-binding site is contributed by K182. Residues K206, D208, and E209 each coordinate Mg(2+). N6-carboxylysine is present on K206. H298 acts as the Proton acceptor in catalysis. Substrate is bound by residues R299, H331, and S383.

Belongs to the RuBisCO large chain family. Type I subfamily. As to quaternary structure, heterohexadecamer of 8 large chains and 8 small chains. Mg(2+) is required as a cofactor.

It carries out the reaction 2 (2R)-3-phosphoglycerate + 2 H(+) = D-ribulose 1,5-bisphosphate + CO2 + H2O. It catalyses the reaction D-ribulose 1,5-bisphosphate + O2 = 2-phosphoglycolate + (2R)-3-phosphoglycerate + 2 H(+). Functionally, ruBisCO catalyzes two reactions: the carboxylation of D-ribulose 1,5-bisphosphate, the primary event in carbon dioxide fixation, as well as the oxidative fragmentation of the pentose substrate. Both reactions occur simultaneously and in competition at the same active site. This is Ribulose bisphosphate carboxylase large chain 2 from Nitrobacter winogradskyi (strain ATCC 25391 / DSM 10237 / CIP 104748 / NCIMB 11846 / Nb-255).